A 290-amino-acid polypeptide reads, in one-letter code: 4-hydroxy-3-methylbut-2-enyl diphosphate reductase (290 aa).

[4Fe-4S] cluster is bound at residue cysteine 13. Residues histidine 41 and histidine 75 each contribute to the (2E)-4-hydroxy-3-methylbut-2-enyl diphosphate site. Histidine 41 and histidine 75 together coordinate dimethylallyl diphosphate. The isopentenyl diphosphate site is built by histidine 41 and histidine 75. Cysteine 97 provides a ligand contact to [4Fe-4S] cluster. Residue histidine 129 participates in (2E)-4-hydroxy-3-methylbut-2-enyl diphosphate binding. Histidine 129 lines the dimethylallyl diphosphate pocket. An isopentenyl diphosphate-binding site is contributed by histidine 129. Residue glutamate 131 is the Proton donor of the active site. Threonine 167 lines the (2E)-4-hydroxy-3-methylbut-2-enyl diphosphate pocket. Cysteine 198 contributes to the [4Fe-4S] cluster binding site. Residues serine 226, serine 227, asparagine 228, and serine 270 each coordinate (2E)-4-hydroxy-3-methylbut-2-enyl diphosphate. Dimethylallyl diphosphate-binding residues include serine 226, serine 227, asparagine 228, and serine 270. Serine 226, serine 227, asparagine 228, and serine 270 together coordinate isopentenyl diphosphate.

Belongs to the IspH family. It depends on [4Fe-4S] cluster as a cofactor.

It catalyses the reaction isopentenyl diphosphate + 2 oxidized [2Fe-2S]-[ferredoxin] + H2O = (2E)-4-hydroxy-3-methylbut-2-enyl diphosphate + 2 reduced [2Fe-2S]-[ferredoxin] + 2 H(+). The catalysed reaction is dimethylallyl diphosphate + 2 oxidized [2Fe-2S]-[ferredoxin] + H2O = (2E)-4-hydroxy-3-methylbut-2-enyl diphosphate + 2 reduced [2Fe-2S]-[ferredoxin] + 2 H(+). Its pathway is isoprenoid biosynthesis; dimethylallyl diphosphate biosynthesis; dimethylallyl diphosphate from (2E)-4-hydroxy-3-methylbutenyl diphosphate: step 1/1. It functions in the pathway isoprenoid biosynthesis; isopentenyl diphosphate biosynthesis via DXP pathway; isopentenyl diphosphate from 1-deoxy-D-xylulose 5-phosphate: step 6/6. Functionally, catalyzes the conversion of 1-hydroxy-2-methyl-2-(E)-butenyl 4-diphosphate (HMBPP) into a mixture of isopentenyl diphosphate (IPP) and dimethylallyl diphosphate (DMAPP). Acts in the terminal step of the DOXP/MEP pathway for isoprenoid precursor biosynthesis. The sequence is that of 4-hydroxy-3-methylbut-2-enyl diphosphate reductase from Bacteroides fragilis (strain ATCC 25285 / DSM 2151 / CCUG 4856 / JCM 11019 / LMG 10263 / NCTC 9343 / Onslow / VPI 2553 / EN-2).